A 373-amino-acid polypeptide reads, in one-letter code: Spermidine/putrescine import ATP-binding protein PotA (373 aa).

The region spanning 8–238 (FELRGVSKYF…PANLYVARFV (231 aa)) is the ABC transporter domain. 40-47 (GPSGCGKT) is a binding site for ATP.

Belongs to the ABC transporter superfamily. Spermidine/putrescine importer (TC 3.A.1.11.1) family. As to quaternary structure, the complex is composed of two ATP-binding proteins (PotA), two transmembrane proteins (PotB and PotC) and a solute-binding protein (PotD).

It is found in the cell inner membrane. It catalyses the reaction ATP + H2O + polyamine-[polyamine-binding protein]Side 1 = ADP + phosphate + polyamineSide 2 + [polyamine-binding protein]Side 1.. Functionally, part of the ABC transporter complex PotABCD involved in spermidine/putrescine import. Responsible for energy coupling to the transport system. In Oleidesulfovibrio alaskensis (strain ATCC BAA-1058 / DSM 17464 / G20) (Desulfovibrio alaskensis), this protein is Spermidine/putrescine import ATP-binding protein PotA.